An 88-amino-acid chain; its full sequence is MTILASISSIGNVKSISKSNNLSSLSNSSSSLQSMNSIQCGGCGNGGLLGAVGGLVGGVLTGTGVIVGSVLHGVGSILTGGSNNCGCN.

Belongs to the hssA/B family.

The protein is HssA/B-like protein 17 (hssl17) of Dictyostelium discoideum (Social amoeba).